The following is a 337-amino-acid chain: GTPase Obg (337 aa).

The 159-residue stretch at Met-1–Met-159 folds into the Obg domain. The OBG-type G domain occupies Ala-160 to Ser-322. GTP contacts are provided by residues Gly-166–Ser-173, Phe-191–Val-195, Asp-213–Gly-216, Thr-280–Asp-283, and Ser-303–Val-305. 2 residues coordinate Mg(2+): Ser-173 and Thr-193.

The protein belongs to the TRAFAC class OBG-HflX-like GTPase superfamily. OBG GTPase family. As to quaternary structure, monomer. The cofactor is Mg(2+).

The protein localises to the cytoplasm. In terms of biological role, an essential GTPase which binds GTP, GDP and possibly (p)ppGpp with moderate affinity, with high nucleotide exchange rates and a fairly low GTP hydrolysis rate. Plays a role in control of the cell cycle, stress response, ribosome biogenesis and in those bacteria that undergo differentiation, in morphogenesis control. The chain is GTPase Obg from Chlorobium phaeobacteroides (strain DSM 266 / SMG 266 / 2430).